The primary structure comprises 143 residues: Transcriptional regulator MraZ (143 aa).

2 consecutive SpoVT-AbrB domains span residues 5 to 47 and 76 to 119; these read EYQH…PKDE and AIES…SKDN.

This sequence belongs to the MraZ family. In terms of assembly, forms oligomers.

It is found in the cytoplasm. The protein resides in the nucleoid. In Oenococcus oeni (strain ATCC BAA-331 / PSU-1), this protein is Transcriptional regulator MraZ.